We begin with the raw amino-acid sequence, 221 residues long: MKVSMSLILITLSALVTIAKAYDPSPLQDFCVAIDDPKNGVFVNGKFCKDPKQAKAEDFFSSGLNQAGITNNKVQSNVTTVNVDQIPGLNTLGISLVRIDYAPYGQNPPHTHPRATEILVLVEGTLYVGFVSSNQDNNRLFAKVLNPGDVFVFPIGMIHFQVNIGKTPAVAFAGLSSQNAGVITIADTVFGSTPPINPDILAQAFQLDVNVVKDLEAKFKN.

The N-terminal stretch at 1-21 is a signal peptide; sequence MKVSMSLILITLSALVTIAKA. An intrachain disulfide couples Cys31 to Cys48. The Cupin type-1 domain occupies 76-213; sequence SNVTTVNVDQ…AFQLDVNVVK (138 aa). A glycan (N-linked (GlcNAc...) asparagine) is linked at Asn77. Residues His110, His112, Glu117, and His159 each contribute to the Mn(2+) site.

This sequence belongs to the germin family. As to quaternary structure, oligomer (believed to be a pentamer but probably hexamer).

It localises to the secreted. The protein resides in the extracellular space. Its subcellular location is the apoplast. May play a role in plant defense. Probably has no oxalate oxidase activity even if the active site is conserved. The polypeptide is Germin-like protein subfamily 1 member 17 (Arabidopsis thaliana (Mouse-ear cress)).